The chain runs to 378 residues: MPSSWGKIFRVSTFGESHGTSVGVVVDGVPAGLPFPEEEIQKDLTRRRPGQNDLTTPRDEKDRMVVESGVFEGKTTGSPILMKVNNQNTIGSDYDEMAHVFRPSHADYTYSEKYGHRAHVGGGRSSVRETIGRVAAAGLARVILENELGISTVGFVDSIGPIDSNITEDEYPISRDLVDQFPTRCPKASANEEMETLIRKLRDEGDSVGGVVKVVVRNLPPGLGDPVYDKLDADLAKAILSISACKGFEVGSGFSGTRQTGSTHNDEFYIEEGTGKVKTRTNRSGGIQGGISNGMDLVIRAAFKPTSTIKKEQKTINDQNKETILKAKGRHDPCVLPRAVPIVEAVVNLVLVDAYLYQRALQPKWFMKYANLNAIPNQ.

The segment at 37–60 is disordered; that stretch reads EEEIQKDLTRRRPGQNDLTTPRDE. Arg47 contacts NADP(+). Residues 124 to 126, Gly289, 304 to 308, and Arg330 each bind FMN; these read RSS and KPTST.

It belongs to the chorismate synthase family. Homotetramer. Requires FMNH2 as cofactor.

It carries out the reaction 5-O-(1-carboxyvinyl)-3-phosphoshikimate = chorismate + phosphate. It participates in metabolic intermediate biosynthesis; chorismate biosynthesis; chorismate from D-erythrose 4-phosphate and phosphoenolpyruvate: step 7/7. Functionally, catalyzes the anti-1,4-elimination of the C-3 phosphate and the C-6 proR hydrogen from 5-enolpyruvylshikimate-3-phosphate (EPSP) to yield chorismate, which is the branch point compound that serves as the starting substrate for the three terminal pathways of aromatic amino acid biosynthesis. This reaction introduces a second double bond into the aromatic ring system. In Leptospira biflexa serovar Patoc (strain Patoc 1 / Ames), this protein is Chorismate synthase.